The chain runs to 648 residues: Nucleoside triphosphatase I (648 aa).

Positions 48–212 constitute a Helicase ATP-binding domain; the sequence is FIGLKNLNSM…NNLIGLLRPN (165 aa). 61–68 provides a ligand contact to ATP; sequence WDTGMGKT. The DEXH box motif lies at 150 to 153; the sequence is DEVH. The Helicase C-terminal domain occupies 378 to 541; that stretch reads YIETCKIILN…KINVIFDLLK (164 aa). Positions 467-533 are binding to the cap-specific mRNA (nucleoside-2'-O-)-methyltransferase; it reads DIIILDMPWN…DIIKDKQGKI (67 aa).

This sequence belongs to the helicase family. NPH I subfamily. As to quaternary structure, monomer. Interacts (via C-terminus) with RAP94 (via N-terminus). Interacts with the cap-specific mRNA (nucleoside-2'-O-)-methyltransferase.

It localises to the virion. It catalyses the reaction a ribonucleoside 5'-triphosphate + H2O = a ribonucleoside 5'-diphosphate + phosphate + H(+). Its function is as follows. DNA-dependent ATPase required for providing the needed energy to achieve the termination of early transcripts. Acts in concert with the RAP94 subunit of the virion RNA polymerase and the capping enzyme/VTF to catalyze release of UUUUUNU-containing nascent RNA from the elongation complex. NPH-I must bind ssDNA in order to exhibit ATPase activity. This is Nucleoside triphosphatase I (NPH1) from Amsacta (AmEPV).